We begin with the raw amino-acid sequence, 350 residues long: Protein-glutamate methylesterase/protein-glutamine glutaminase (350 aa).

Positions 5-122 (RVLSVDDSAL…REGMLAYSEM (118 aa)) constitute a Response regulatory domain. Asp56 bears the 4-aspartylphosphate mark. The region spanning 152 to 338 (LLSSEKLLVI…DLSQVVSQQM (187 aa)) is the CheB-type methylesterase domain. Catalysis depends on residues Ser164, His190, and Asp286.

The protein belongs to the CheB family. Post-translationally, phosphorylated by CheA. Phosphorylation of the N-terminal regulatory domain activates the methylesterase activity.

It localises to the cytoplasm. The enzyme catalyses [protein]-L-glutamate 5-O-methyl ester + H2O = L-glutamyl-[protein] + methanol + H(+). It catalyses the reaction L-glutaminyl-[protein] + H2O = L-glutamyl-[protein] + NH4(+). Functionally, involved in chemotaxis. Part of a chemotaxis signal transduction system that modulates chemotaxis in response to various stimuli. Catalyzes the demethylation of specific methylglutamate residues introduced into the chemoreceptors (methyl-accepting chemotaxis proteins or MCP) by CheR. Also mediates the irreversible deamidation of specific glutamine residues to glutamic acid. This chain is Protein-glutamate methylesterase/protein-glutamine glutaminase, found in Enterobacter cloacae.